The primary structure comprises 596 residues: MSTSPAARPTSNAHLLGWVDEMAKLCKPDRVYWCDGSEAEKKRLTDDAVAAKVLIPLDQQKWPGCHYHHSNSSDVARVEHLTFICTPTKEQAGPTNNWMEPKEAYRKLGAIFDGSMKGRTMYVVPYVMGPSTSPFAKVGIEITDSVYVALNMGIMARMGKVALDRLGDSDEFNRGLHSVADCNPERRFICHFPQDNTIWSVGSGYGGNALLGKKCLALRIASYLAKNEGWLAEHMLILEAESPTGEKQYVAAAFPSACGKTNFAMMIPPAAFPGWKIRTVGDDISWMRVGEDGRLWAVNPENGYFGVAPGTNRKTNPNAMDSVRKDTIFTNVARTPDGDIWWEGMDHEAPAELIDWKGQPWKKGSTEKAAHPNSRFTAPAKNNPAISPLVDDPKGVPISAIIFGGRRSTTVPLVLEAFNWTHGVYLGSTMGSETTAAATGQVGVVRRDPMAMLPFIGYDCGSYLQHWLDMQSRIPNPPKIFLVNWFRKSAEGKFLWPGYGDNMRVLKWMLDRAAGRAPAQETLLGYTPGDAGLDLHGLDVSKDAIAAATRIDLGEWEQELESQSEWFEKLGKTLPRPLALQRELLLERVRAARKVK.

Residues Arg-77 and Tyr-205–Gly-207 each bind substrate. Positions 214 and 234 each coordinate Mn(2+). Ser-256 serves as a coordination point for substrate. Position 257–262 (Ala-257–Asn-262) interacts with GTP. Cys-258 is a catalytic residue. Asp-283 is a binding site for Mn(2+). The segment at Lys-362–Pro-388 is disordered. Residue Asn-373–Arg-375 participates in substrate binding. GTP contacts are provided by residues Arg-375, Arg-406, and Tyr-499 to Asn-502.

The protein belongs to the phosphoenolpyruvate carboxykinase [GTP] family. In terms of assembly, monomer. Mn(2+) serves as cofactor.

Its subcellular location is the cytoplasm. It catalyses the reaction oxaloacetate + GTP = phosphoenolpyruvate + GDP + CO2. Its pathway is carbohydrate biosynthesis; gluconeogenesis. Its function is as follows. Catalyzes the conversion of oxaloacetate (OAA) to phosphoenolpyruvate (PEP), the rate-limiting step in the metabolic pathway that produces glucose from lactate and other precursors derived from the citric acid cycle. The protein is Phosphoenolpyruvate carboxykinase [GTP] of Anaeromyxobacter sp. (strain K).